A 954-amino-acid chain; its full sequence is Valine--tRNA ligase (954 aa).

The short motif at 48 to 58 is the 'HIGH' region element; sequence PNVTGSLHMGH. The short motif at 560–564 is the 'KMSKS' region element; that stretch reads KMSKS. K563 provides a ligand contact to ATP. The stretch at 883–953 forms a coiled coil; that stretch reads AGFINKEAEL…IQEQYKAIEA (71 aa).

Belongs to the class-I aminoacyl-tRNA synthetase family. ValS type 1 subfamily. As to quaternary structure, monomer.

The protein localises to the cytoplasm. It carries out the reaction tRNA(Val) + L-valine + ATP = L-valyl-tRNA(Val) + AMP + diphosphate. Catalyzes the attachment of valine to tRNA(Val). As ValRS can inadvertently accommodate and process structurally similar amino acids such as threonine, to avoid such errors, it has a 'posttransfer' editing activity that hydrolyzes mischarged Thr-tRNA(Val) in a tRNA-dependent manner. The protein is Valine--tRNA ligase of Haemophilus influenzae (strain 86-028NP).